Reading from the N-terminus, the 427-residue chain is Glutamate-1-semialdehyde 2,1-aminomutase (427 aa).

Position 265 is an N6-(pyridoxal phosphate)lysine (Lys-265).

Belongs to the class-III pyridoxal-phosphate-dependent aminotransferase family. HemL subfamily. Homodimer. It depends on pyridoxal 5'-phosphate as a cofactor.

It localises to the cytoplasm. It carries out the reaction (S)-4-amino-5-oxopentanoate = 5-aminolevulinate. It functions in the pathway porphyrin-containing compound metabolism; protoporphyrin-IX biosynthesis; 5-aminolevulinate from L-glutamyl-tRNA(Glu): step 2/2. The chain is Glutamate-1-semialdehyde 2,1-aminomutase from Nitratiruptor sp. (strain SB155-2).